A 715-amino-acid polypeptide reads, in one-letter code: Serrate RNA effector molecule homolog (715 aa).

3 disordered regions span residues 1–87 (MDSD…YSGP), 223–259 (ENKDAAEKVEDQVKDEVKEEPNEEQEEGAIDDETDKA), and 629–715 (EPKH…DDIP). 3 stretches are compositionally biased toward basic and acidic residues: residues 7-25 (GDRRRDKFARERRDDDSYR), 37-57 (YDNKRPAGRREDYQVKRSRGD), and 223-242 (ENKDAAEKVEDQVKDEVKEE). Over residues 243 to 256 (PNEEQEEGAIDDET) the composition is skewed to acidic residues. Basic and acidic residues predominate over residues 629–659 (EPKHMPHMSRDDHRGGGGDRGYGRERDDDRG).

This sequence belongs to the ARS2 family.

It is found in the nucleus. Its function is as follows. Acts as a mediator between the cap-binding complex (CBC) and the primary microRNAs (miRNAs) processing machinery. Contributes to the stability and delivery of capped primary miRNA transcripts to the primary miRNA processing complex, thereby playing a role in RNA-mediated gene silencing (RNAi) by miRNAs. This Caenorhabditis briggsae protein is Serrate RNA effector molecule homolog.